We begin with the raw amino-acid sequence, 252 residues long: Adaptation to cold protein B (252 aa).

Interacts with AtcC, but not with AtcA and AtcJ. Interacts with the RNA polymerase subunits RpoB and RpoC.

Involved in cold adaptation. Directly interacts with the RNA polymerase and decreases its activity. May direct the DnaK chaperone to the RNA polymerase to sustain life at low temperatures. Overproduction prevents bacterial growth due to RNA polymerase inhibition. The protein is Adaptation to cold protein B of Shewanella oneidensis (strain ATCC 700550 / JCM 31522 / CIP 106686 / LMG 19005 / NCIMB 14063 / MR-1).